The sequence spans 1235 residues: ATP-dependent helicase/nuclease subunit A (1235 aa).

In terms of domain architecture, UvrD-like helicase ATP-binding spans arginine 4–methionine 470. Residue alanine 25–threonine 32 coordinates ATP. Residues glutamine 501–glycine 795 enclose the UvrD-like helicase C-terminal domain.

The protein belongs to the helicase family. AddA subfamily. In terms of assembly, heterodimer of AddA and AddB/RexB. Mg(2+) serves as cofactor.

It carries out the reaction Couples ATP hydrolysis with the unwinding of duplex DNA by translocating in the 3'-5' direction.. It catalyses the reaction ATP + H2O = ADP + phosphate + H(+). Functionally, the heterodimer acts as both an ATP-dependent DNA helicase and an ATP-dependent, dual-direction single-stranded exonuclease. Recognizes the chi site generating a DNA molecule suitable for the initiation of homologous recombination. The AddA nuclease domain is required for chi fragment generation; this subunit has the helicase and 3' -&gt; 5' nuclease activities. The sequence is that of ATP-dependent helicase/nuclease subunit A from Pediococcus pentosaceus (strain ATCC 25745 / CCUG 21536 / LMG 10740 / 183-1w).